Here is a 96-residue protein sequence, read N- to C-terminus: Co-chaperonin GroES (96 aa).

This sequence belongs to the GroES chaperonin family. Heptamer of 7 subunits arranged in a ring. Interacts with the chaperonin GroEL.

It localises to the cytoplasm. Functionally, together with the chaperonin GroEL, plays an essential role in assisting protein folding. The GroEL-GroES system forms a nano-cage that allows encapsulation of the non-native substrate proteins and provides a physical environment optimized to promote and accelerate protein folding. GroES binds to the apical surface of the GroEL ring, thereby capping the opening of the GroEL channel. The chain is Co-chaperonin GroES from Buchnera aphidicola subsp. Acyrthosiphon pisum (strain 5A).